The primary structure comprises 79 residues: D-alanyl carrier protein (79 aa).

A Carrier domain is found at 1–77 (MDVKETILNI…KIISGVVELM (77 aa)). At Ser-35 the chain carries O-(pantetheine 4'-phosphoryl)serine.

It belongs to the DltC family. Post-translationally, 4'-phosphopantetheine is transferred from CoA to a specific serine of apo-DCP.

Its subcellular location is the cytoplasm. It functions in the pathway cell wall biogenesis; lipoteichoic acid biosynthesis. In terms of biological role, carrier protein involved in the D-alanylation of lipoteichoic acid (LTA). The loading of thioester-linked D-alanine onto DltC is catalyzed by D-alanine--D-alanyl carrier protein ligase DltA. The DltC-carried D-alanyl group is further transferred to cell membrane phosphatidylglycerol (PG) by forming an ester bond, probably catalyzed by DltD. D-alanylation of LTA plays an important role in modulating the properties of the cell wall in Gram-positive bacteria, influencing the net charge of the cell wall. The polypeptide is D-alanyl carrier protein (Streptococcus suis (strain 05ZYH33)).